An 87-amino-acid polypeptide reads, in one-letter code: Small ribosomal subunit protein uS15 (87 aa).

The protein belongs to the universal ribosomal protein uS15 family. Part of the 30S ribosomal subunit. Forms a bridge to the 50S subunit in the 70S ribosome, contacting the 23S rRNA.

In terms of biological role, one of the primary rRNA binding proteins, it binds directly to 16S rRNA where it helps nucleate assembly of the platform of the 30S subunit by binding and bridging several RNA helices of the 16S rRNA. Functionally, forms an intersubunit bridge (bridge B4) with the 23S rRNA of the 50S subunit in the ribosome. This is Small ribosomal subunit protein uS15 from Dehalococcoides mccartyi (strain ATCC BAA-2100 / JCM 16839 / KCTC 5957 / BAV1).